Consider the following 72-residue polypeptide: Translation initiation factor IF-1 2 (72 aa).

The S1-like domain maps to 1 to 72 (MSKDDVIEVE…TRGRIVYRYK (72 aa)).

This sequence belongs to the IF-1 family. Component of the 30S ribosomal translation pre-initiation complex which assembles on the 30S ribosome in the order IF-2 and IF-3, IF-1 and N-formylmethionyl-tRNA(fMet); mRNA recruitment can occur at any time during PIC assembly.

It localises to the cytoplasm. Functionally, one of the essential components for the initiation of protein synthesis. Stabilizes the binding of IF-2 and IF-3 on the 30S subunit to which N-formylmethionyl-tRNA(fMet) subsequently binds. Helps modulate mRNA selection, yielding the 30S pre-initiation complex (PIC). Upon addition of the 50S ribosomal subunit IF-1, IF-2 and IF-3 are released leaving the mature 70S translation initiation complex. In Symbiobacterium thermophilum (strain DSM 24528 / JCM 14929 / IAM 14863 / T), this protein is Translation initiation factor IF-1 2.